Here is a 545-residue protein sequence, read N- to C-terminus: E3 ubiquitin-protein ligase ipaH9.8 (545 aa).

Residues 1 to 242 (MLPINNNFSL…YHGPRIYFSM (242 aa)) form an interaction with target proteins region. 8 LRR repeats span residues 57 to 77 (NSDE…NLPA), 78 to 99 (QITL…PVTL), 100 to 117 (KKLY…VLPP), 118 to 139 (ALES…PDSL), 140 to 157 (LTMN…SLPL), 158 to 179 (ALKN…SEGN), 182 to 203 (VVRE…ILNL), and 205 to 228 (NECS…QRLT). The linker stretch occupies residues 243–250 (SDGQQNTL). Residues 251–545 (HRPLADAVTA…SENGSQLHHS (295 aa)) are E3 ubiquitin-protein ligase catalytic domain. In terms of domain architecture, NEL spans 253–545 (PLADAVTAWF…SENGSQLHHS (293 aa)). Residue Cys337 is the Glycyl thioester intermediate of the active site.

This sequence belongs to the LRR-containing bacterial E3 ligase family. Also interacts with human and mouse U2AF1 (U2AF35). Ubiquitinated in the presence of host E1 ubiquitin-activating enzyme, E2 ubiquitin-conjugating enzyme and ubiquitin.

Its subcellular location is the secreted. It localises to the host cytoplasm. It is found in the host nucleus. It catalyses the reaction S-ubiquitinyl-[E2 ubiquitin-conjugating enzyme]-L-cysteine + [acceptor protein]-L-lysine = [E2 ubiquitin-conjugating enzyme]-L-cysteine + N(6)-ubiquitinyl-[acceptor protein]-L-lysine.. Exists in an autoinhibited state in the absence of substrate protein, due to interactions of the leucine-rich repeats with NEL domain. Is activated upon binding to a substrate protein. Functionally, effector E3 ubiquitin ligase that interferes with host's ubiquitination pathway and modulates the acute inflammatory responses, thus facilitating bacterial colonization within the host cell. Interacts with IKBKG (NEMO) and TNIP1 (ABIN-1), a ubiquitin-binding adapter protein, which results in TNIP1-dependent 'Lys-27'-linked polyubiquitination of IKBKG. Consequently, polyubiquitinated IKBKG undergoes proteasome-dependent degradation, which perturbs NF-kappa-B activation during bacterial infection. Mediates polyubiquitination of host U2AF1, leading to its proteasomal degradation. Catalyzes 'Lys-48'-linked polyubiquitination and subsequent degradation of a subset of host guanylate-binding proteins (GBP1, GBP2, GBP4 and GBP6), thereby suppressing host cell defense. In contrast, host GBP3 and GBP7 are not ubiquitinated by IpaH9.8. Uses UBE2D2 (UBCH5B) as an E2 ubiquitin-conjugating enzyme. This Shigella boydii serotype 4 (strain Sb227) protein is E3 ubiquitin-protein ligase ipaH9.8 (ipaH9.8).